The sequence spans 435 residues: Methylenetetrahydrofolate--tRNA-(uracil-5-)-methyltransferase TrmFO (435 aa).

Residue 7–12 (GAGLAG) coordinates FAD.

The protein belongs to the MnmG family. TrmFO subfamily. The cofactor is FAD.

It is found in the cytoplasm. It catalyses the reaction uridine(54) in tRNA + (6R)-5,10-methylene-5,6,7,8-tetrahydrofolate + NADH + H(+) = 5-methyluridine(54) in tRNA + (6S)-5,6,7,8-tetrahydrofolate + NAD(+). The enzyme catalyses uridine(54) in tRNA + (6R)-5,10-methylene-5,6,7,8-tetrahydrofolate + NADPH + H(+) = 5-methyluridine(54) in tRNA + (6S)-5,6,7,8-tetrahydrofolate + NADP(+). In terms of biological role, catalyzes the folate-dependent formation of 5-methyl-uridine at position 54 (M-5-U54) in all tRNAs. The protein is Methylenetetrahydrofolate--tRNA-(uracil-5-)-methyltransferase TrmFO of Thermotoga maritima (strain ATCC 43589 / DSM 3109 / JCM 10099 / NBRC 100826 / MSB8).